The following is a 417-amino-acid chain: UDP-N-acetylglucosamine 1-carboxyvinyltransferase (417 aa).

22–23 (KN) serves as a coordination point for phosphoenolpyruvate. A UDP-N-acetyl-alpha-D-glucosamine-binding site is contributed by R93. C117 functions as the Proton donor in the catalytic mechanism. C117 is subject to 2-(S-cysteinyl)pyruvic acid O-phosphothioketal. UDP-N-acetyl-alpha-D-glucosamine contacts are provided by residues 122-126 (RPVDQ), D304, and I326.

The protein belongs to the EPSP synthase family. MurA subfamily.

It localises to the cytoplasm. The catalysed reaction is phosphoenolpyruvate + UDP-N-acetyl-alpha-D-glucosamine = UDP-N-acetyl-3-O-(1-carboxyvinyl)-alpha-D-glucosamine + phosphate. It functions in the pathway cell wall biogenesis; peptidoglycan biosynthesis. Cell wall formation. Adds enolpyruvyl to UDP-N-acetylglucosamine. The polypeptide is UDP-N-acetylglucosamine 1-carboxyvinyltransferase (Neisseria meningitidis serogroup B (strain ATCC BAA-335 / MC58)).